A 249-amino-acid chain; its full sequence is Pyridoxine 5'-phosphate synthase (249 aa).

3-amino-2-oxopropyl phosphate is bound at residue Asn7. 9 to 10 provides a ligand contact to 1-deoxy-D-xylulose 5-phosphate; it reads DH. Residue Arg18 coordinates 3-amino-2-oxopropyl phosphate. The Proton acceptor role is filled by His43. Residues Arg45 and His50 each contribute to the 1-deoxy-D-xylulose 5-phosphate site. Glu70 (proton acceptor) is an active-site residue. 1-deoxy-D-xylulose 5-phosphate is bound at residue Thr100. His190 functions as the Proton donor in the catalytic mechanism. 3-amino-2-oxopropyl phosphate is bound by residues Gly191 and 212–213; that span reads GH.

The protein belongs to the PNP synthase family. Homooctamer; tetramer of dimers.

It is found in the cytoplasm. The catalysed reaction is 3-amino-2-oxopropyl phosphate + 1-deoxy-D-xylulose 5-phosphate = pyridoxine 5'-phosphate + phosphate + 2 H2O + H(+). It participates in cofactor biosynthesis; pyridoxine 5'-phosphate biosynthesis; pyridoxine 5'-phosphate from D-erythrose 4-phosphate: step 5/5. Its function is as follows. Catalyzes the complicated ring closure reaction between the two acyclic compounds 1-deoxy-D-xylulose-5-phosphate (DXP) and 3-amino-2-oxopropyl phosphate (1-amino-acetone-3-phosphate or AAP) to form pyridoxine 5'-phosphate (PNP) and inorganic phosphate. This chain is Pyridoxine 5'-phosphate synthase, found in Synechococcus sp. (strain CC9311).